The following is a 98-amino-acid chain: NADH-ubiquinone oxidoreductase chain 4L (98 aa).

3 helical membrane-spanning segments follow: residues 1 to 21, 30 to 50, and 61 to 81; these read MSMV…GLLI, LLCL…TILI, and IILL…LVMI.

The protein belongs to the complex I subunit 4L family. Core subunit of respiratory chain NADH dehydrogenase (Complex I) which is composed of 45 different subunits.

Its subcellular location is the mitochondrion inner membrane. The catalysed reaction is a ubiquinone + NADH + 5 H(+)(in) = a ubiquinol + NAD(+) + 4 H(+)(out). Functionally, core subunit of the mitochondrial membrane respiratory chain NADH dehydrogenase (Complex I) which catalyzes electron transfer from NADH through the respiratory chain, using ubiquinone as an electron acceptor. Part of the enzyme membrane arm which is embedded in the lipid bilayer and involved in proton translocation. This chain is NADH-ubiquinone oxidoreductase chain 4L (MT-ND4L), found in Neovison vison (American mink).